The primary structure comprises 370 residues: Cytochrome b (370 aa).

Transmembrane regions (helical) follow at residues 25 to 45 (FGSM…FLAI), 69 to 90 (WIMQ…YIHI), 105 to 125 (WLSG…GYVL), and 170 to 190 (FFAL…IHII). The heme b site is built by histidine 75 and histidine 89. Heme b contacts are provided by histidine 174 and histidine 188. Residue histidine 193 participates in a ubiquinone binding. 4 helical membrane passes run 218–238 (YKDM…MSFT), 280–300 (LGGT…PFTH), 312–332 (LTQI…WTAT), and 339–358 (FISI…IINP).

The protein belongs to the cytochrome b family. As to quaternary structure, the cytochrome bc1 complex contains 3 respiratory subunits (MT-CYB, CYC1 and UQCRFS1), 2 core proteins (UQCRC1 and UQCRC2) and probably 6 low-molecular weight proteins. Heme b serves as cofactor.

Its subcellular location is the mitochondrion inner membrane. Its function is as follows. Component of the ubiquinol-cytochrome c reductase complex (complex III or cytochrome b-c1 complex) that is part of the mitochondrial respiratory chain. The b-c1 complex mediates electron transfer from ubiquinol to cytochrome c. Contributes to the generation of a proton gradient across the mitochondrial membrane that is then used for ATP synthesis. The polypeptide is Cytochrome b (MT-CYB) (Bungarus fasciatus (Banded krait)).